The chain runs to 298 residues: ATP synthase gamma chain (298 aa).

It belongs to the ATPase gamma chain family. F-type ATPases have 2 components, CF(1) - the catalytic core - and CF(0) - the membrane proton channel. CF(1) has five subunits: alpha(3), beta(3), gamma(1), delta(1), epsilon(1). CF(0) has three main subunits: a, b and c.

The protein resides in the cell inner membrane. Produces ATP from ADP in the presence of a proton gradient across the membrane. The gamma chain is believed to be important in regulating ATPase activity and the flow of protons through the CF(0) complex. The protein is ATP synthase gamma chain of Francisella tularensis subsp. tularensis (strain WY96-3418).